The chain runs to 449 residues: Gamma-aminobutyric acid receptor subunit delta (449 aa).

The signal sequence occupies residues 1–24; that stretch reads MDVLGWLLLPLLLLCTQPHHGARA. Residues 25–251 lie on the Extracellular side of the membrane; sequence MNDIGDYVGS…QLRRNRGVYI (227 aa). Asparagine 103 and asparagine 106 each carry an N-linked (GlcNAc...) asparagine glycan. Cysteine 164 and cysteine 178 are oxidised to a cystine. Residues 252–271 traverse the membrane as a helical segment; sequence IQSYMPSVLLVAMSWVSFWI. Over 272–275 the chain is Cytoplasmic; the sequence is SQAA. Residues 276–298 traverse the membrane as a helical segment; sequence VPARVSLGITTVLTMTTLMVSAR. At 299–308 the chain is on the extracellular side; it reads SSLPRASAIK. The chain crosses the membrane as a helical span at residues 309–331; that stretch reads ALDVYFWICYVFVFAALVEYAFA. Residues 332 to 423 lie on the Cytoplasmic side of the membrane; sequence HFNADYRKKR…SRLKPIDADT (92 aa). Serine 390 is subject to Phosphoserine. A helical membrane pass occupies residues 424–446; that stretch reads IDIYARAVFPAAFAAVNIIYWAA. The Extracellular segment spans residues 447–449; it reads YTM.

The protein belongs to the ligand-gated ion channel (TC 1.A.9) family. Gamma-aminobutyric acid receptor (TC 1.A.9.5) subfamily. GABRD sub-subfamily. In terms of assembly, heteropentamer, formed by a combination of alpha (GABRA1-6), beta (GABRB1-3), gamma (GABRG1-3), delta (GABRD), epsilon (GABRE), rho (GABRR1-3), pi (GABRP) and theta (GABRQ) chains, each subunit exhibiting distinct physiological and pharmacological properties.

Its subcellular location is the cell membrane. It carries out the reaction chloride(in) = chloride(out). Its function is as follows. Delta subunit of the heteropentameric ligand-gated chloride channel gated by gamma-aminobutyric acid (GABA), a major inhibitory neurotransmitter in the brain. GABA-gated chloride channels, also named GABA(A) receptors (GABAAR), consist of five subunits arranged around a central pore and contain GABA active binding site(s) located at the alpha and beta subunit interface(s). When activated by GABA, GABAARs selectively allow the flow of chloride anions across the cell membrane down their electrochemical gradient. GABAARs containing delta/GABRD subunits are predominantly expressed and located in extrasynaptic or perisynaptic positions on hippocampus and cerebellar granule cells, and contribute to the tonic GABAergic inhibition. GABAAR containing alpha-4-beta-3-delta subunits can simultaneously bind GABA and histamine where histamine binds at the interface of two neighboring beta subunits, which may be involved in the regulation of sleep and wakefulness. The protein is Gamma-aminobutyric acid receptor subunit delta of Mus musculus (Mouse).